We begin with the raw amino-acid sequence, 475 residues long: Glycogen synthase (475 aa).

Residue K15 participates in ADP-alpha-D-glucose binding.

This sequence belongs to the glycosyltransferase 1 family. Bacterial/plant glycogen synthase subfamily.

It catalyses the reaction [(1-&gt;4)-alpha-D-glucosyl](n) + ADP-alpha-D-glucose = [(1-&gt;4)-alpha-D-glucosyl](n+1) + ADP + H(+). It functions in the pathway glycan biosynthesis; glycogen biosynthesis. Synthesizes alpha-1,4-glucan chains using ADP-glucose. The sequence is that of Glycogen synthase from Kosmotoga olearia (strain ATCC BAA-1733 / DSM 21960 / TBF 19.5.1).